The following is a 196-amino-acid chain: ATP-dependent Clp protease proteolytic subunit (196 aa).

Ser101 acts as the Nucleophile in catalysis. His126 is a catalytic residue.

The protein belongs to the peptidase S14 family. Component of the chloroplastic Clp protease core complex.

Its subcellular location is the plastid. The protein localises to the chloroplast stroma. It catalyses the reaction Hydrolysis of proteins to small peptides in the presence of ATP and magnesium. alpha-casein is the usual test substrate. In the absence of ATP, only oligopeptides shorter than five residues are hydrolyzed (such as succinyl-Leu-Tyr-|-NHMec, and Leu-Tyr-Leu-|-Tyr-Trp, in which cleavage of the -Tyr-|-Leu- and -Tyr-|-Trp bonds also occurs).. Cleaves peptides in various proteins in a process that requires ATP hydrolysis. Has a chymotrypsin-like activity. Plays a major role in the degradation of misfolded proteins. This chain is ATP-dependent Clp protease proteolytic subunit, found in Lobularia maritima (Sweet alyssum).